The sequence spans 476 residues: ATP synthase subunit beta, chloroplastic (476 aa).

156–163 (GGAGVGKT) lines the ATP pocket.

This sequence belongs to the ATPase alpha/beta chains family. As to quaternary structure, F-type ATPases have 2 components, CF(1) - the catalytic core - and CF(0) - the membrane proton channel. CF(1) has five subunits: alpha(3), beta(3), gamma(1), delta(1), epsilon(1). CF(0) has four main subunits: a(1), b(1), b'(1) and c(9-12).

It is found in the plastid. The protein resides in the chloroplast thylakoid membrane. The enzyme catalyses ATP + H2O + 4 H(+)(in) = ADP + phosphate + 5 H(+)(out). In terms of biological role, produces ATP from ADP in the presence of a proton gradient across the membrane. The catalytic sites are hosted primarily by the beta subunits. The polypeptide is ATP synthase subunit beta, chloroplastic (Fucus vesiculosus (Bladder wrack)).